The following is a 550-amino-acid chain: Membrane protein insertase YidC (550 aa).

Residues 3–23 (IKRTVLWVIFFMSAVMLFDNW) traverse the membrane as a helical segment. Residues 34–73 (FPSATQTKTAAPAAPGSSTTASQPTDLPQTTAAAPGSTTP) form a disordered region. Over residues 35-73 (PSATQTKTAAPAAPGSSTTASQPTDLPQTTAAAPGSTTP) the composition is skewed to low complexity. 4 helical membrane-spanning segments follow: residues 363–383 (WGWA…PLSA), 429–449 (FGGC…YWVL), 472–492 (PYFI…KLNP), and 503–523 (MMFM…GLVL).

It belongs to the OXA1/ALB3/YidC family. Type 1 subfamily. In terms of assembly, interacts with the Sec translocase complex via SecD. Specifically interacts with transmembrane segments of nascent integral membrane proteins during membrane integration.

The protein resides in the cell inner membrane. Functionally, required for the insertion and/or proper folding and/or complex formation of integral membrane proteins into the membrane. Involved in integration of membrane proteins that insert both dependently and independently of the Sec translocase complex, as well as at least some lipoproteins. Aids folding of multispanning membrane proteins. The protein is Membrane protein insertase YidC of Paraburkholderia phymatum (strain DSM 17167 / CIP 108236 / LMG 21445 / STM815) (Burkholderia phymatum).